The primary structure comprises 222 residues: Large ribosomal subunit protein uL1 (222 aa).

The protein belongs to the universal ribosomal protein uL1 family. In terms of assembly, part of the 50S ribosomal subunit.

Functionally, binds directly to 23S rRNA. Probably involved in E site tRNA release. Protein L1 is also a translational repressor protein, it controls the translation of its operon by binding to its mRNA. The sequence is that of Large ribosomal subunit protein uL1 from Pyrobaculum arsenaticum (strain DSM 13514 / JCM 11321 / PZ6).